We begin with the raw amino-acid sequence, 122 residues long: RxLR effector protein Avh52 (122 aa).

A signal peptide spans methionine 1–alanine 21. The RxLR-dEER signature appears at arginine 50–arginine 68. Positions serine 69–valine 86 are TAP1-binding. Residues lysine 87–lysine 98 are nuclear localization signal (NLS).

The protein belongs to the RxLR effector family. In terms of assembly, interacts with host acetyl transferase TAP1.

The protein resides in the secreted. Its subcellular location is the host nucleus. Functionally, effector that suppresses plant defense responses during the early stages of pathogen infection. Suppresses cell death induced by effectors and PAMPs in plant hosts. Interacts with host acetyltransferase TAP1 and causes TAP1 relocation into the nucleus where it acetylates histones H2A and H3 during early infection, thereby promoting susceptibility of host plant to P.sojae. The polypeptide is RxLR effector protein Avh52 (Phytophthora sojae (strain P6497) (Soybean stem and root rot agent)).